Consider the following 864-residue polypeptide: Protein translocase subunit SecA (864 aa).

ATP contacts are provided by residues glutamine 87, 105–109, and aspartate 494; that span reads GEGKT. Residues 809-864 are disordered; that stretch reads AKATELRHKEQPAELSYSGGDEDGAKTPSRRNAPKVGRNDPCPCGSGKKYKKCCGA. The segment covering 810-820 has biased composition (basic and acidic residues); that stretch reads KATELRHKEQP. 4 residues coordinate Zn(2+): cysteine 850, cysteine 852, cysteine 861, and cysteine 862.

It belongs to the SecA family. As to quaternary structure, monomer and homodimer. Part of the essential Sec protein translocation apparatus which comprises SecA, SecYEG and auxiliary proteins SecDF-YajC and YidC. Zn(2+) serves as cofactor.

The protein resides in the cell inner membrane. It localises to the cytoplasm. It carries out the reaction ATP + H2O + cellular proteinSide 1 = ADP + phosphate + cellular proteinSide 2.. Functionally, part of the Sec protein translocase complex. Interacts with the SecYEG preprotein conducting channel. Has a central role in coupling the hydrolysis of ATP to the transfer of proteins into and across the cell membrane, serving as an ATP-driven molecular motor driving the stepwise translocation of polypeptide chains across the membrane. This chain is Protein translocase subunit SecA, found in Oleidesulfovibrio alaskensis (strain ATCC BAA-1058 / DSM 17464 / G20) (Desulfovibrio alaskensis).